A 212-amino-acid chain; its full sequence is Ribonuclease HII (212 aa).

The 195-residue stretch at 17–211 (RVLAGIDEAG…VLELLDLTDS (195 aa)) folds into the RNase H type-2 domain. A divalent metal cation is bound by residues D23, E24, and D120.

It belongs to the RNase HII family. The cofactor is Mn(2+). It depends on Mg(2+) as a cofactor.

The protein resides in the cytoplasm. The enzyme catalyses Endonucleolytic cleavage to 5'-phosphomonoester.. Endonuclease that specifically degrades the RNA of RNA-DNA hybrids. In Chloroflexus aggregans (strain MD-66 / DSM 9485), this protein is Ribonuclease HII.